The following is a 76-amino-acid chain: ATP synthase subunit 9, mitochondrial (76 aa).

The next 2 membrane-spanning stretches (helical) occupy residues 14-34 (ISTIGTLGAGIGIAIVFAALI) and 48-68 (FPFAITGFALSEATGLFCLMV).

It belongs to the ATPase C chain family. F-type ATPases have 2 components, CF(1) - the catalytic core - and CF(0) - the membrane proton channel. CF(1) has five subunits: alpha(3), beta(3), gamma(1), delta(1), epsilon(1). CF(0) has three main subunits: a, b and c.

The protein localises to the mitochondrion membrane. Functionally, mitochondrial membrane ATP synthase (F(1)F(0) ATP synthase or Complex V) produces ATP from ADP in the presence of a proton gradient across the membrane which is generated by electron transport complexes of the respiratory chain. F-type ATPases consist of two structural domains, F(1) - containing the extramembraneous catalytic core and F(0) - containing the membrane proton channel, linked together by a central stalk and a peripheral stalk. During catalysis, ATP synthesis in the catalytic domain of F(1) is coupled via a rotary mechanism of the central stalk subunits to proton translocation. Part of the complex F(0) domain. A homomeric c-ring of probably 10 subunits is part of the complex rotary element. This is ATP synthase subunit 9, mitochondrial (ATP9) from Cyberlindnera mrakii (Yeast).